The chain runs to 179 residues: ATP synthase subunit delta (179 aa).

This sequence belongs to the ATPase delta chain family. As to quaternary structure, F-type ATPases have 2 components, F(1) - the catalytic core - and F(0) - the membrane proton channel. F(1) has five subunits: alpha(3), beta(3), gamma(1), delta(1), epsilon(1). F(0) has three main subunits: a(1), b(2) and c(10-14). The alpha and beta chains form an alternating ring which encloses part of the gamma chain. F(1) is attached to F(0) by a central stalk formed by the gamma and epsilon chains, while a peripheral stalk is formed by the delta and b chains.

The protein resides in the cell inner membrane. F(1)F(0) ATP synthase produces ATP from ADP in the presence of a proton or sodium gradient. F-type ATPases consist of two structural domains, F(1) containing the extramembraneous catalytic core and F(0) containing the membrane proton channel, linked together by a central stalk and a peripheral stalk. During catalysis, ATP synthesis in the catalytic domain of F(1) is coupled via a rotary mechanism of the central stalk subunits to proton translocation. In terms of biological role, this protein is part of the stalk that links CF(0) to CF(1). It either transmits conformational changes from CF(0) to CF(1) or is implicated in proton conduction. The sequence is that of ATP synthase subunit delta from Anaeromyxobacter sp. (strain Fw109-5).